The following is a 224-amino-acid chain: Twisted gastrulation protein homolog 1 (224 aa).

Positions 1–26 (MRSPCAALSASLLLLLLLLWARSSVG) are cleaved as a signal peptide. Residues asparagine 53, asparagine 82, and asparagine 148 are each glycosylated (N-linked (GlcNAc...) asparagine).

The protein belongs to the twisted gastrulation protein family. In terms of assembly, interacts with CHRD and BMP4. This interaction enhances CHRD/BMP4 complex formation. Interacts with BMP7.

The protein localises to the secreted. In terms of biological role, may be involved in dorsoventral axis formation. Seems to antagonize BMP signaling by forming ternary complexes with CHRD and BMPs, thereby preventing BMPs from binding to their receptors. In addition to the anti-BMP function, also has pro-BMP activity, partly mediated by cleavage and degradation of CHRD, which releases BMPs from ternary complexes. May be an important modulator of BMP-regulated cartilage development and chondrocyte differentiation. May play a role in thymocyte development. The polypeptide is Twisted gastrulation protein homolog 1 (TWSG1) (Gallus gallus (Chicken)).